The sequence spans 81 residues: Cell division protein ZapB (81 aa).

Residues 5–81 (LEVFEKLEAK…QALLGRMEEV (77 aa)) are a coiled coil. An N6-acetyllysine modification is found at K10. A disordered region spans residues 36–67 (NNSLSQEVQNAQHQREELERENNHLKEQQNGW). Positions 37 to 47 (NSLSQEVQNAQ) are enriched in polar residues. Over residues 48–62 (HQREELERENNHLKE) the composition is skewed to basic and acidic residues.

Belongs to the ZapB family. As to quaternary structure, homodimer. The ends of the coiled-coil dimer bind to each other, forming polymers. Interacts with FtsZ.

The protein resides in the cytoplasm. In terms of biological role, non-essential, abundant cell division factor that is required for proper Z-ring formation. It is recruited early to the divisome by direct interaction with FtsZ, stimulating Z-ring assembly and thereby promoting cell division earlier in the cell cycle. Its recruitment to the Z-ring requires functional FtsA or ZipA. The sequence is that of Cell division protein ZapB from Shigella boydii serotype 4 (strain Sb227).